The chain runs to 411 residues: Dual-specificity RNA methyltransferase RlmN (411 aa).

E125 acts as the Proton acceptor in catalysis. The region spanning 131 to 380 (EEGRGTLCIS…IRTPRGRDIL (250 aa)) is the Radical SAM core domain. C138 and C383 are joined by a disulfide. [4Fe-4S] cluster contacts are provided by C145, C149, and C152. S-adenosyl-L-methionine-binding positions include 209-210 (GE), S241, 263-265 (SLH), and N340. Residue C383 is the S-methylcysteine intermediate of the active site.

Belongs to the radical SAM superfamily. RlmN family. [4Fe-4S] cluster serves as cofactor.

The protein resides in the cytoplasm. The catalysed reaction is adenosine(2503) in 23S rRNA + 2 reduced [2Fe-2S]-[ferredoxin] + 2 S-adenosyl-L-methionine = 2-methyladenosine(2503) in 23S rRNA + 5'-deoxyadenosine + L-methionine + 2 oxidized [2Fe-2S]-[ferredoxin] + S-adenosyl-L-homocysteine. The enzyme catalyses adenosine(37) in tRNA + 2 reduced [2Fe-2S]-[ferredoxin] + 2 S-adenosyl-L-methionine = 2-methyladenosine(37) in tRNA + 5'-deoxyadenosine + L-methionine + 2 oxidized [2Fe-2S]-[ferredoxin] + S-adenosyl-L-homocysteine. Specifically methylates position 2 of adenine 2503 in 23S rRNA and position 2 of adenine 37 in tRNAs. m2A2503 modification seems to play a crucial role in the proofreading step occurring at the peptidyl transferase center and thus would serve to optimize ribosomal fidelity. In Brucella melitensis biotype 2 (strain ATCC 23457), this protein is Dual-specificity RNA methyltransferase RlmN.